We begin with the raw amino-acid sequence, 70 residues long: Large ribosomal subunit protein eL38 (70 aa).

A Glycyl lysine isopeptide (Lys-Gly) (interchain with G-Cter in SUMO2) cross-link involves residue Lys4. Lys9 bears the N6-acetyllysine; alternate mark. Lys9 participates in a covalent cross-link: Glycyl lysine isopeptide (Lys-Gly) (interchain with G-Cter in SUMO2); alternate. Lys67 is subject to N6-acetyllysine.

This sequence belongs to the eukaryotic ribosomal protein eL38 family. Component of the large ribosomal subunit.

The protein resides in the cytoplasm. Its function is as follows. Component of the large ribosomal subunit. The ribosome is a large ribonucleoprotein complex responsible for the synthesis of proteins in the cell. In Mus musculus (Mouse), this protein is Large ribosomal subunit protein eL38 (Rpl38).